The chain runs to 120 residues: UPF0342 protein Csac_0863 (120 aa).

It belongs to the UPF0342 family.

The chain is UPF0342 protein Csac_0863 from Caldicellulosiruptor saccharolyticus (strain ATCC 43494 / DSM 8903 / Tp8T 6331).